A 73-amino-acid chain; its full sequence is Translation initiation factor IF-1 (73 aa).

The 73-residue stretch at 1 to 73 folds into the S1-like domain; sequence MAKKEGALEL…TRGRIVYRHK (73 aa).

It belongs to the IF-1 family. In terms of assembly, component of the 30S ribosomal translation pre-initiation complex which assembles on the 30S ribosome in the order IF-2 and IF-3, IF-1 and N-formylmethionyl-tRNA(fMet); mRNA recruitment can occur at any time during PIC assembly.

It localises to the cytoplasm. Functionally, one of the essential components for the initiation of protein synthesis. Stabilizes the binding of IF-2 and IF-3 on the 30S subunit to which N-formylmethionyl-tRNA(fMet) subsequently binds. Helps modulate mRNA selection, yielding the 30S pre-initiation complex (PIC). Upon addition of the 50S ribosomal subunit IF-1, IF-2 and IF-3 are released leaving the mature 70S translation initiation complex. This is Translation initiation factor IF-1 from Cutibacterium acnes (strain DSM 16379 / KPA171202) (Propionibacterium acnes).